The following is a 542-amino-acid chain: CTP synthase (542 aa).

Positions 1–265 are amidoligase domain; sequence MTRYVFITGG…DREVLGHFGL (265 aa). A CTP-binding site is contributed by S13. Residue S13 coordinates UTP. ATP is bound by residues 14-19 and D71; that span reads SLGKGL. 2 residues coordinate Mg(2+): D71 and E139. CTP contacts are provided by residues 146–148, 186–191, and K222; these read DIE and KTKPTQ. UTP is bound by residues 186-191 and K222; that span reads KTKPTQ. The 251-residue stretch at 291 to 541 folds into the Glutamine amidotransferase type-1 domain; it reads SIAIVGKYTG…VGAAIEQSRL (251 aa). G353 contributes to the L-glutamine binding site. C380 functions as the Nucleophile; for glutamine hydrolysis in the catalytic mechanism. L-glutamine contacts are provided by residues 381–384, E404, and R469; that span reads FGMQ. Catalysis depends on residues H514 and E516.

The protein belongs to the CTP synthase family. As to quaternary structure, homotetramer.

It catalyses the reaction UTP + L-glutamine + ATP + H2O = CTP + L-glutamate + ADP + phosphate + 2 H(+). It carries out the reaction L-glutamine + H2O = L-glutamate + NH4(+). The enzyme catalyses UTP + NH4(+) + ATP = CTP + ADP + phosphate + 2 H(+). It functions in the pathway pyrimidine metabolism; CTP biosynthesis via de novo pathway; CTP from UDP: step 2/2. Its activity is regulated as follows. Allosterically activated by GTP, when glutamine is the substrate; GTP has no effect on the reaction when ammonia is the substrate. The allosteric effector GTP functions by stabilizing the protein conformation that binds the tetrahedral intermediate(s) formed during glutamine hydrolysis. Inhibited by the product CTP, via allosteric rather than competitive inhibition. Functionally, catalyzes the ATP-dependent amination of UTP to CTP with either L-glutamine or ammonia as the source of nitrogen. Regulates intracellular CTP levels through interactions with the four ribonucleotide triphosphates. The chain is CTP synthase from Methylobacterium radiotolerans (strain ATCC 27329 / DSM 1819 / JCM 2831 / NBRC 15690 / NCIMB 10815 / 0-1).